A 324-amino-acid polypeptide reads, in one-letter code: Anthranilate phosphoribosyltransferase (324 aa).

5-phospho-alpha-D-ribose 1-diphosphate is bound by residues G72, 75 to 76, T80, 82 to 85, 99 to 107, and S111; these read GD, NVST, and KHGNVSVTS. Position 72 (G72) interacts with anthranilate. S84 serves as a coordination point for Mg(2+). N102 lines the anthranilate pocket. Residue R157 participates in anthranilate binding. Positions 215 and 216 each coordinate Mg(2+).

The protein belongs to the anthranilate phosphoribosyltransferase family. Homodimer. Mg(2+) is required as a cofactor.

The enzyme catalyses N-(5-phospho-beta-D-ribosyl)anthranilate + diphosphate = 5-phospho-alpha-D-ribose 1-diphosphate + anthranilate. Its pathway is amino-acid biosynthesis; L-tryptophan biosynthesis; L-tryptophan from chorismate: step 2/5. In terms of biological role, catalyzes the transfer of the phosphoribosyl group of 5-phosphorylribose-1-pyrophosphate (PRPP) to anthranilate to yield N-(5'-phosphoribosyl)-anthranilate (PRA). This Pyrococcus furiosus (strain ATCC 43587 / DSM 3638 / JCM 8422 / Vc1) protein is Anthranilate phosphoribosyltransferase.